The chain runs to 110 residues: Cytochrome c6 (110 aa).

The first 25 residues, 1–25 (MKKTLSVLFTAFSFCVIGFTQVAFA), serve as a signal peptide directing secretion. The heme c site is built by C39, C42, H43, and M83.

Belongs to the cytochrome c family. PetJ subfamily. Monomer. Post-translationally, binds 1 heme c group covalently per subunit.

It localises to the plastid. Its subcellular location is the chloroplast thylakoid lumen. In terms of biological role, functions as an electron carrier between membrane-bound cytochrome b6-f and photosystem I in oxygenic photosynthesis. The sequence is that of Cytochrome c6 (petJ) from Porphyra purpurea (Red seaweed).